We begin with the raw amino-acid sequence, 230 residues long: Uracil-DNA glycosylase (230 aa).

Asp-70 functions as the Proton acceptor in the catalytic mechanism.

This sequence belongs to the uracil-DNA glycosylase (UDG) superfamily. UNG family.

It is found in the cytoplasm. It catalyses the reaction Hydrolyzes single-stranded DNA or mismatched double-stranded DNA and polynucleotides, releasing free uracil.. Excises uracil residues from the DNA which can arise as a result of misincorporation of dUMP residues by DNA polymerase or due to deamination of cytosine. The sequence is that of Uracil-DNA glycosylase from Pseudomonas syringae pv. syringae (strain B728a).